Reading from the N-terminus, the 331-residue chain is CRISPR-associated endonuclease Cas1 (331 aa).

The Mn(2+) site is built by E155, H221, and E236.

This sequence belongs to the CRISPR-associated endonuclease Cas1 family. As to quaternary structure, homodimer, forms a heterotetramer with a Cas2 homodimer. It depends on Mg(2+) as a cofactor. Requires Mn(2+) as cofactor.

CRISPR (clustered regularly interspaced short palindromic repeat), is an adaptive immune system that provides protection against mobile genetic elements (viruses, transposable elements and conjugative plasmids). CRISPR clusters contain spacers, sequences complementary to antecedent mobile elements, and target invading nucleic acids. CRISPR clusters are transcribed and processed into CRISPR RNA (crRNA). Acts as a dsDNA endonuclease. Involved in the integration of spacer DNA into the CRISPR cassette. The sequence is that of CRISPR-associated endonuclease Cas1 from Methanopyrus kandleri (strain AV19 / DSM 6324 / JCM 9639 / NBRC 100938).